The primary structure comprises 100 residues: Sec-independent protein translocase protein TatA (100 aa).

A helical membrane pass occupies residues 1–21 (MGALRPWHIAVLVVVLILLFG). Residues 46-58 (LHDDDRDLAEKAD) are compositionally biased toward basic and acidic residues. The segment at 46–100 (LHDDDRDLAEKADAQAGYQPMPPQVQQGQHPQQSPYPAPPQQQPVVDPVQRTRDS) is disordered. A compositionally biased stretch (low complexity) spans 69–78 (QVQQGQHPQQ).

Belongs to the TatA/E family. The Tat system comprises two distinct complexes: a TatABC complex, containing multiple copies of TatA, TatB and TatC subunits, and a separate TatA complex, containing only TatA subunits. Substrates initially bind to the TatABC complex, which probably triggers association of the separate TatA complex to form the active translocon.

The protein resides in the cell membrane. Functionally, part of the twin-arginine translocation (Tat) system that transports large folded proteins containing a characteristic twin-arginine motif in their signal peptide across membranes. TatA could form the protein-conducting channel of the Tat system. This chain is Sec-independent protein translocase protein TatA, found in Salinispora tropica (strain ATCC BAA-916 / DSM 44818 / JCM 13857 / NBRC 105044 / CNB-440).